The sequence spans 773 residues: MSVAEIEEGVFEATVTIDNGSFGTRAIRFETGRLALQAAGAVVAYLDADNMLLSATTASKNPKEQFDFFPLTVDVEERMYAAGRIPGSFFRREGRPSTDAILTCRLIDRPLRPSFVDGLRNEIQVVVTILSVDPNDLYDVLAINAASASTQLGGLPFSGPIGGVRVALIDGTWVAFPTVEQLERAVFDMVIAGRIVGTDDEGKPDVAIMMVEAEATENVIELVECGAQAPTESIVAQGLEVAKPFIAALCTAQQELADVVSSRQAKPPVEYPTFPDYGDDVYYSVASMATDELAAALTIGAKLERDQRTNEIKTQVLERLAGTYEGREKELGAAFRSLTKKLVRQRILTNHFRIDGRGITDIRALSAEVAVVPRAHGSALFERGETQILGVTTLDMVKMAQQIDSLGPETSKRYMHHYNFPPFSTGETGRVGSPKRREIGHGALAERALVPVLPSVEEFPYAIRQVSEALGSNGSTSMGSVCASTLALLNAGVPLKAPVAGIAMGLVSDDVEFDGGTERRFVTLTDILGAEDAFGDMDFKCAGTKDFVTALQLDTKLDGIPSQVLAGALAQAKDARLTILEVMAEAIDRPDEMSPYAPRVITIKVPVDKIGEVIGPKGKVINAITEETGAQISIEDDGTVFVGATDGLSAQAAINKINAIANPQLPTVGERFLGTVVKITEFGAFVSLLPGRDGLVHISKLGKGKRIAKVEDVVNVGDKLRVEIADIEKRGKISLVLVADDDSATVPAAPADAGAAQEFGSGTAPADAATASS.

Residues Asp532 and Asp538 each contribute to the Mg(2+) site. In terms of domain architecture, KH spans 598 to 657 (PRVITIKVPVDKIGEVIGPKGKVINAITEETGAQISIEDDGTVFVGATDGLSAQAAINKI). The S1 motif domain maps to 669-738 (GERFLGTVVK…KRGKISLVLV (70 aa)). A disordered region spans residues 749–773 (APADAGAAQEFGSGTAPADAATASS).

It belongs to the polyribonucleotide nucleotidyltransferase family. Mg(2+) is required as a cofactor.

The protein localises to the cytoplasm. The catalysed reaction is RNA(n+1) + phosphate = RNA(n) + a ribonucleoside 5'-diphosphate. In terms of biological role, involved in mRNA degradation. Catalyzes the phosphorolysis of single-stranded polyribonucleotides processively in the 3'- to 5'-direction. The chain is Polyribonucleotide nucleotidyltransferase from Mycobacterium leprae (strain Br4923).